Here is a 275-residue protein sequence, read N- to C-terminus: Tryptophan synthase alpha chain (275 aa).

Residues E51 and E62 each act as proton acceptor in the active site.

Belongs to the TrpA family. As to quaternary structure, tetramer of two alpha and two beta chains.

The enzyme catalyses (1S,2R)-1-C-(indol-3-yl)glycerol 3-phosphate + L-serine = D-glyceraldehyde 3-phosphate + L-tryptophan + H2O. It participates in amino-acid biosynthesis; L-tryptophan biosynthesis; L-tryptophan from chorismate: step 5/5. Functionally, the alpha subunit is responsible for the aldol cleavage of indoleglycerol phosphate to indole and glyceraldehyde 3-phosphate. The sequence is that of Tryptophan synthase alpha chain from Caulobacter sp. (strain K31).